The sequence spans 383 residues: MPAATMATPGYLACRTSVATLLFFVLLRRAAILGAGGAPSPARIVDYLIGYTRVGDMDKLYSQYADRYLDVTLHGCERAVVDPLGDMRHVLASEGASGQEFTASVIWYYVFPDVCFAPVFRREYLRCIRPRKLEDCYTTSPFMWTREFYVDAFLAGSGTGIELLGLNKKLTGTYMLVVRVGTTTRTALVTVNVVGECPTTMEEVTTTLRGNCWRGRQYTTDFNGDGMYLFDTEEEHRRIVYKAYQDKLKVASPNATDAPISYPRAYTGADERLAPYTLQPVSTDDHYLPGCPWGIGCDLDQTSASGVIEIEDHDESDVRLVSYPPPTLPSPGPGGNENGAGYSDNRPDPKVVGPTVGPGAIILVVMCAPILIGLTAFTIRKYC.

The signal sequence occupies residues 1–30; that stretch reads MPAATMATPGYLACRTSVATLLFFVLLRRA. Residues 31–358 lie on the Virion surface side of the membrane; sequence AILGAGGAPS…PKVVGPTVGP (328 aa). Intrachain disulfides connect Cys-76–Cys-197, Cys-115–Cys-212, and Cys-127–Cys-136. The tract at residues 244 to 311 is profusion; the sequence is YQDKLKVASP…TSASGVIEIE (68 aa). The segment at 315–349 is disordered; it reads ESDVRLVSYPPPTLPSPGPGGNENGAGYSDNRPDP. Residues 323–332 show a composition bias toward pro residues; it reads YPPPTLPSPG. Residues 359–379 traverse the membrane as a helical segment; it reads GAIILVVMCAPILIGLTAFTI. Residues 380–383 are Intravirion-facing; that stretch reads RKYC.

Belongs to the herpesviridae glycoprotein D family.

It is found in the virion membrane. Envelope glycoprotein that binds to host cell entry receptors, promoting the virus entry into host cells. May trigger fusion with host membrane, by recruiting the fusion machinery composed of gB and gH/gL. The polypeptide is Envelope glycoprotein D (US6) (Amazona oratrix (yellow-headed parrot)).